Consider the following 130-residue polypeptide: Small ribosomal subunit protein uS9 (130 aa).

Belongs to the universal ribosomal protein uS9 family.

This is Small ribosomal subunit protein uS9 from Streptococcus uberis (strain ATCC BAA-854 / 0140J).